The following is a 65-amino-acid chain: Keratin-associated protein 23-1 (65 aa).

As to quaternary structure, interacts with hair keratins.

In the hair cortex, hair keratin intermediate filaments are embedded in an interfilamentous matrix, consisting of hair keratin-associated proteins (KRTAP), which are essential for the formation of a rigid and resistant hair shaft through their extensive disulfide bond cross-linking with abundant cysteine residues of hair keratins. The matrix proteins include the high-sulfur and high-glycine-tyrosine keratins. This chain is Keratin-associated protein 23-1 (KRTAP23-1), found in Homo sapiens (Human).